Here is a 231-residue protein sequence, read N- to C-terminus: 7-cyano-7-deazaguanine synthase (231 aa).

An ATP-binding site is contributed by 8 to 18 (FSGGQDSTTCL). Zn(2+) is bound by residues Cys-188, Cys-197, Cys-200, and Cys-203.

It belongs to the QueC family. Zn(2+) is required as a cofactor.

The catalysed reaction is 7-carboxy-7-deazaguanine + NH4(+) + ATP = 7-cyano-7-deazaguanine + ADP + phosphate + H2O + H(+). It participates in purine metabolism; 7-cyano-7-deazaguanine biosynthesis. Catalyzes the ATP-dependent conversion of 7-carboxy-7-deazaguanine (CDG) to 7-cyano-7-deazaguanine (preQ(0)). The protein is 7-cyano-7-deazaguanine synthase of Sodalis glossinidius (strain morsitans).